The sequence spans 325 residues: HTH-type transcriptional regulator BbuR (325 aa).

One can recognise an HTH lysR-type domain in the interval leucine 15–threonine 72. The segment at residues phenylalanine 32–glycine 51 is a DNA-binding region (H-T-H motif).

Belongs to the LysR transcriptional regulatory family.

The polypeptide is HTH-type transcriptional regulator BbuR (bbuR) (Bordetella bronchiseptica (strain ATCC BAA-588 / NCTC 13252 / RB50) (Alcaligenes bronchisepticus)).